A 192-amino-acid chain; its full sequence is Transmembrane protein 276 (192 aa).

The N-terminal stretch at 1–32 (MVSKPRTEWSTVLSHLVLAGVSLHAAVSSVQS) is a signal peptide. 4 consecutive transmembrane segments (helical) span residues 35-55 (GAAA…APGP), 63-83 (AGAW…FHWV), 92-112 (LLLG…PEGC), and 114-134 (VAGQ…AVFT).

It is found in the membrane. The protein is Transmembrane protein 276 of Mus musculus (Mouse).